A 115-amino-acid polypeptide reads, in one-letter code: NADH-ubiquinone oxidoreductase chain 3 (115 aa).

Transmembrane regions (helical) follow at residues 4–24 (LITMTVNSALSFCLISIAFWL), 55–75 (FFLVGITFLLFDLEIALLLPL), and 87–107 (TMMVSFMFVSILALGLAYEWL).

The protein belongs to the complex I subunit 3 family. In terms of assembly, core subunit of respiratory chain NADH dehydrogenase (Complex I) which is composed of 45 different subunits. Interacts with TMEM186. Interacts with TMEM242.

The protein localises to the mitochondrion inner membrane. The enzyme catalyses a ubiquinone + NADH + 5 H(+)(in) = a ubiquinol + NAD(+) + 4 H(+)(out). In terms of biological role, core subunit of the mitochondrial membrane respiratory chain NADH dehydrogenase (Complex I) which catalyzes electron transfer from NADH through the respiratory chain, using ubiquinone as an electron acceptor. Essential for the catalytic activity of complex I. In Notiomys edwardsii (Edwards's long-clawed mouse), this protein is NADH-ubiquinone oxidoreductase chain 3.